Reading from the N-terminus, the 171-residue chain is Spiderine-2b (171 aa).

The N-terminal stretch at 1–18 (MKFALVLLGFCAFYLVNA) is a signal peptide. Residues 19-58 (TGDLETELEASDLQELQEALDLIAETPLESLEAEELEEAR) constitute a propeptide, removed in mature form. The tract at residues 59–104 (KFKFPKINWGKLASKAKDVYKKGQKLAKNKNVKKALKYGKQLAENL) is linear cationic cytotoxin domain. One can recognise an Oxytoxin-type inhibitor cystine knot (ICK) domain in the interval 118–171 (NNKCWAIGTRCTDDCDCCPEHHCHCPAKSWTFGLIPCSCQVTESDKVNKCPPAE). Intrachain disulfides connect cysteine 121–cysteine 135, cysteine 128–cysteine 140, cysteine 132–cysteine 167, cysteine 134–cysteine 156, and cysteine 142–cysteine 154.

The protein belongs to the spiderine family. Cationic/spiderine subfamily. Expressed by the venom gland.

It is found in the secreted. In terms of biological role, has antimicrobial, insecticidal, cytolytic and cytotoxic activity. This chain is Spiderine-2b, found in Oxyopes takobius (Lynx spider).